A 393-amino-acid chain; its full sequence is Isocitrate dehydrogenase [NAD] subunit gamma, mitochondrial (393 aa).

A mitochondrion-targeting transit peptide spans 1–39 (MALKVATVAGSAAKAVLGPALLCRPWEVLGAHEVPSRNI). Citrate contacts are provided by Thr120 and Asn133. Substrate is bound by residues Arg136, Arg167, and Asp254. Mn(2+) is bound at residue Asp254. Positions 312, 313, and 324 each coordinate ADP.

Belongs to the isocitrate and isopropylmalate dehydrogenases family. As to quaternary structure, heterooligomer of subunits alpha (IDH3A), beta (IDH3B), and gamma (IDH3G) in the apparent ratio of 2:1:1. The heterodimer containing one IDH3A and one IDH3B subunit and the heterodimer containing one IDH3A and one IDH3G subunit assemble into a heterotetramer (which contains two subunits of IDH3A, one of IDH3B and one of IDH3G) and further into the heterooctamer. Mg(2+) is required as a cofactor. The cofactor is Mn(2+).

Its subcellular location is the mitochondrion. The heterotetramer and the heterodimer composed of IDH3A and IDH3G subunits can be allosterically activated by citrate (CIT) or/and ADP, and the two activators can act independently or synergistically. The heterodimer composed of IDH3A and IDH3B subunits cannot be allosterically regulated and the allosteric regulation of the heterotetramer is through the IDH3G subunit and not the IDH3B subunit. The IDH3G subunit contains the allosteric site which consists of a CIT-binding site and an ADP-binding site, and the binding of CIT and ADP causes conformational changes at the allosteric site which are transmitted to the active site in the catalytic subunit (IDH3A) through a cascade of conformational changes at the heterodimer interface, leading to stabilization of the isocitrate-binding at the active site and thus activation of the enzyme. ATP can activate the heterotetramer and the heterodimer composed of IDH3A and IDH3G subunits at low concentrations but inhibits their activities at high concentrations, whereas ATP exhibits only inhibitory effect on the heterodimer composed of IDH3A and IDH3B subunits. Regulatory subunit which plays a role in the allosteric regulation of the enzyme catalyzing the decarboxylation of isocitrate (ICT) into alpha-ketoglutarate. The heterodimer composed of the alpha (IDH3A) and beta (IDH3B) subunits and the heterodimer composed of the alpha (IDH3A) and gamma (IDH3G) subunits, have considerable basal activity but the full activity of the heterotetramer (containing two subunits of IDH3A, one of IDH3B and one of IDH3G) requires the assembly and cooperative function of both heterodimers. This is Isocitrate dehydrogenase [NAD] subunit gamma, mitochondrial (IDH3G) from Homo sapiens (Human).